We begin with the raw amino-acid sequence, 428 residues long: Spliceosome RNA helicase DDX39B (428 aa).

The span at methionine 1–glutamate 19 shows a compositional bias: acidic residues. The disordered stretch occupies residues methionine 1–alanine 31. The residue at position 2 (alanine 2) is an N-acetylalanine. Residue lysine 36 is modified to N6-acetyllysine; alternate. Lysine 36 participates in a covalent cross-link: Glycyl lysine isopeptide (Lys-Gly) (interchain with G-Cter in SUMO2); alternate. Phosphoserine is present on residues serine 38 and serine 41. Residues serine 45 to histidine 73 carry the Q motif motif. The 174-residue stretch at isoleucine 76–isoleucine 249 folds into the Helicase ATP-binding domain. Alanine 89–threonine 96 provides a ligand contact to ATP. Residue threonine 172 is modified to Phosphothreonine. Residues aspartate 196 to aspartate 199 carry the DECD box motif. The Helicase C-terminal domain occupies glycine 261–serine 422.

This sequence belongs to the DEAD box helicase family. DECD subfamily. As to quaternary structure, homodimer, and heterodimer with DDX39A. DDX39B interacts with the THO subcomplex to form the THO-DDX39B complex which multimerizes into a 28-subunit tetrameric assembly. Component of the transcription/export (TREX) complex at least composed of ALYREF/THOC4, DDX39B, SARNP/CIP29, CHTOP and the THO subcomplex; in the complex interacts with THOC2. THOC1-THOC2-THOC3-DDX39B subcomplex is sufficient for the interaction with export factor NXF1-NXT1. TREX seems to have a dynamic structure involving ATP-dependent remodeling. Within the TREX complex bridges ALYREF/THOC4 and the THO subcomplex, and, in a ATP-dependent manner, ALYREF/THOC4 and SARNP/CIP29. Component of the spliceosome. Interacts directly with U2AF2. Interacts with RBM8A, RNPS1 and SRRM1, FYTTD1/UIF, THOC1, MX1 and POLDIP3. Interacts with LUZP4. Interacts with SARNP/CIP29 (via the C-terminal domain); the interaction is direct and facilitates RNA binding of DDX39B.

It localises to the nucleus. The protein localises to the nucleus speckle. The protein resides in the cytoplasm. The catalysed reaction is ATP + H2O = ADP + phosphate + H(+). Functionally, involved in nuclear export of spliced and unspliced mRNA. Component of the TREX complex which is thought to couple mRNA transcription, processing and nuclear export, and specifically associates with spliced mRNA and not with unspliced pre-mRNA. The TREX complex is recruited to spliced mRNAs by a transcription-independent mechanism, binds to mRNA upstream of the exon-junction complex (EJC) and is recruited in a splicing- and cap-dependent manner to a region near the 5' end of the mRNA where it functions in mRNA export to the cytoplasm via the TAP/NXF1 pathway. The THOC1-THOC2-THOC3 core complex alone is sufficient to promote ATPase activity of DDX39B; in the complex THOC2 is the only component that directly interacts with DDX39B. Associates with SARNP/CIP29, which facilitates RNA binding of DDX39B and likely plays a role in mRNA export. May undergo several rounds of ATP hydrolysis during assembly of TREX to drive subsequent loading of components such as ALYREF/THOC4 and CHTOP onto mRNA. Also associates with pre-mRNA independent of ALYREF/THOC4. Involved in the nuclear export of intronless mRNA; the ATP-bound form is proposed to recruit export adapter ALYREF/THOC4 to intronless mRNA; its ATPase activity is cooperatively stimulated by RNA and ALYREF/THOC4 and ATP hydrolysis is thought to trigger the dissociation from RNA to allow the association of ALYREF/THOC4 and the NXF1-NXT1 heterodimer. Involved in transcription elongation and genome stability. Its function is as follows. Splice factor that is required for the first ATP-dependent step in spliceosome assembly and for the interaction of U2 snRNP with the branchpoint. Has both RNA-stimulated ATP binding/hydrolysis activity and ATP-dependent RNA unwinding activity. Even with the stimulation of RNA, the ATPase activity is weak. Can only hydrolyze ATP but not other NTPs. The RNA stimulation of ATPase activity does not have a strong preference for the sequence and length of the RNA. However, ssRNA stimulates the ATPase activity much more strongly than dsRNA. Can unwind 5' or 3' overhangs or blunt end RNA duplexes in vitro. The ATPase and helicase activities are not influenced by U2AF2; the effect of ALYREF/THOC4 is reported conflictingly. This Bos taurus (Bovine) protein is Spliceosome RNA helicase DDX39B (DDX39B).